The following is a 295-amino-acid chain: Light-independent protochlorophyllide reductase iron-sulfur ATP-binding protein (295 aa).

Residues 39–44 (GIGKST) and lysine 68 contribute to the ATP site. Residue serine 43 participates in Mg(2+) binding. [4Fe-4S] cluster-binding residues include cysteine 124 and cysteine 158. Residues 209 to 210 (NR) and 233 to 235 (PDL) contribute to the ATP site.

It belongs to the NifH/BchL/ChlL family. In terms of assembly, homodimer. Protochlorophyllide reductase is composed of three subunits; BchL, BchN and BchB. Requires [4Fe-4S] cluster as cofactor.

The enzyme catalyses chlorophyllide a + oxidized 2[4Fe-4S]-[ferredoxin] + 2 ADP + 2 phosphate = protochlorophyllide a + reduced 2[4Fe-4S]-[ferredoxin] + 2 ATP + 2 H2O. It participates in porphyrin-containing compound metabolism; bacteriochlorophyll biosynthesis (light-independent). Component of the dark-operative protochlorophyllide reductase (DPOR) that uses Mg-ATP and reduced ferredoxin to reduce ring D of protochlorophyllide (Pchlide) to form chlorophyllide a (Chlide). This reaction is light-independent. The L component serves as a unique electron donor to the NB-component of the complex, and binds Mg-ATP. The protein is Light-independent protochlorophyllide reductase iron-sulfur ATP-binding protein of Rhodospirillum rubrum (strain ATCC 11170 / ATH 1.1.1 / DSM 467 / LMG 4362 / NCIMB 8255 / S1).